Here is a 2698-residue protein sequence, read N- to C-terminus: Chromodomain-helicase-DNA-binding protein 6 (2698 aa).

Basic and acidic residues-rich tracts occupy residues 1–12 (MKMKIQKKEKQL), 100–115 (EPGE…DREP), and 122–171 (EPKE…KRSC). The segment at 1–243 (MKMKIQKKEK…KRRSGRQVKR (243 aa)) is disordered. The required for DNA-dependent ATPase activity stretch occupies residues 1–746 (MKMKIQKKEK…MMELRKCCNH (746 aa)). Positions 213–224 (QSLPNPSLQSPE) are enriched in low complexity. 2 Chromo domains span residues 291 to 342 (NIIE…KDPR) and 374 to 438 (IEID…KPVE). The Helicase ATP-binding domain occupies 472-646 (LFNWYNRKNC…FSLLNFLEPS (175 aa)). 485-492 (DEMGLGKT) is an ATP binding site. The short motif at 597 to 600 (DEAH) is the DEAH box element. The Helicase C-terminal domain occupies 786 to 955 (LIDKLLPKLI…LSKMEVEDLL (170 aa)). Residues 1318-1370 (SLSAEQGVTDGTSDIPERGNIDKEDSAEDKVDGLQKQTASPSDGSDGIFGEKK) form a disordered region. Residues 1320–1329 (SAEQGVTDGT) show a composition bias toward polar residues. Positions 1332–1350 (IPERGNIDKEDSAEDKVDG) are enriched in basic and acidic residues. In terms of domain architecture, Myb-like spans 1435–1489 (RWTRREQADFYRTVSSFGVVYDQEKEAFDWTQFRAISRLDKKSDENLEHYFHSFV). A compositionally biased stretch (polar residues) spans 1707–1730 (EPRSFQEAPSTNMQSRKKTVTVSA). Positions 1707–1731 (EPRSFQEAPSTNMQSRKKTVTVSAS) are disordered. Ser-1852 bears the Phosphoserine mark. 6 disordered regions span residues 1935 to 2046 (GLGS…ASGI), 2111 to 2137 (LPTP…HSFS), 2308 to 2337 (TTLN…QAEK), 2359 to 2387 (PGFG…IGSL), 2538 to 2587 (ASLA…PTIT), and 2626 to 2698 (QGRH…DDTN). Basic and acidic residues-rich tracts occupy residues 1943-1955 (GEKP…DPYR), 1975-1991 (FKLK…ESSE), and 2004-2024 (SEPK…KDGA). 2 stretches are compositionally biased toward low complexity: residues 2117–2127 (SSSAGSRSSLS) and 2315–2336 (PEGP…SQAE). Residues 2538–2550 (ASLASTKSGASAT) are compositionally biased toward low complexity. A compositionally biased stretch (basic and acidic residues) spans 2552–2573 (KTTEDELSGRDVKADSLVEDKP). Composition is skewed to polar residues over residues 2578–2587 (FSDQSEPTIT) and 2664–2675 (SDQNCTESSVTV). Positions 2677–2698 (PEREHVAQAREEGLKDSNDDTN) are enriched in basic and acidic residues.

Belongs to the SNF2/RAD54 helicase family. In terms of assembly, interacts with NFE2L2; involved in activation of the transcription. May interact with PPARA. As to expression, widely expressed.

It is found in the nucleus. Its subcellular location is the nucleoplasm. The enzyme catalyses ATP + H2O = ADP + phosphate + H(+). In terms of biological role, ATP-dependent chromatin-remodeling factor. Regulates transcription by disrupting nucleosomes in a largely non-sliding manner which strongly increases the accessibility of chromatin. Activates transcription of specific genes in response to oxidative stress through interaction with NFE2L2. The sequence is that of Chromodomain-helicase-DNA-binding protein 6 (Chd6) from Rattus norvegicus (Rat).